We begin with the raw amino-acid sequence, 407 residues long: tRNA(Ile)-lysidine synthase (407 aa).

Residue 36-41 (SGGRDS) coordinates ATP.

It belongs to the tRNA(Ile)-lysidine synthase family.

It localises to the cytoplasm. It carries out the reaction cytidine(34) in tRNA(Ile2) + L-lysine + ATP = lysidine(34) in tRNA(Ile2) + AMP + diphosphate + H(+). Ligates lysine onto the cytidine present at position 34 of the AUA codon-specific tRNA(Ile) that contains the anticodon CAU, in an ATP-dependent manner. Cytidine is converted to lysidine, thus changing the amino acid specificity of the tRNA from methionine to isoleucine. The sequence is that of tRNA(Ile)-lysidine synthase from Tropheryma whipplei (strain TW08/27) (Whipple's bacillus).